We begin with the raw amino-acid sequence, 408 residues long: Peptidase T (408 aa).

Histidine 78 is a binding site for Zn(2+). Aspartate 80 is an active-site residue. Zn(2+) is bound at residue aspartate 140. Glutamate 173 acts as the Proton acceptor in catalysis. Residues glutamate 174, aspartate 196, and histidine 379 each coordinate Zn(2+).

Belongs to the peptidase M20B family. Zn(2+) serves as cofactor.

Its subcellular location is the cytoplasm. It catalyses the reaction Release of the N-terminal residue from a tripeptide.. Functionally, cleaves the N-terminal amino acid of tripeptides. The sequence is that of Peptidase T from Escherichia fergusonii (strain ATCC 35469 / DSM 13698 / CCUG 18766 / IAM 14443 / JCM 21226 / LMG 7866 / NBRC 102419 / NCTC 12128 / CDC 0568-73).